The sequence spans 238 residues: Small heat shock protein, chloroplastic (238 aa).

A disordered region spans residues 31-87; it reads APLSTGGRTRPLSVASAAQENRDNSVDVQVSQAQNAGNQQGNAVQRRPRRAGFDISP. Low complexity predominate over residues 58–75; sequence VQVSQAQNAGNQQGNAVQ. In terms of domain architecture, sHSP spans 124 to 238; sequence AARARRRMPW…ERKVIDVQVQ (115 aa).

The protein belongs to the small heat shock protein (HSP20) family.

The protein localises to the plastid. It is found in the chloroplast. The protein is Small heat shock protein, chloroplastic (HSP21) of Triticum aestivum (Wheat).